We begin with the raw amino-acid sequence, 100 residues long: Small ribosomal subunit protein uS14c (100 aa).

It belongs to the universal ribosomal protein uS14 family. In terms of assembly, part of the 30S ribosomal subunit.

It localises to the plastid. The protein resides in the chloroplast. Binds 16S rRNA, required for the assembly of 30S particles. The protein is Small ribosomal subunit protein uS14c of Lactuca sativa (Garden lettuce).